A 974-amino-acid chain; its full sequence is Collagen alpha-1(I) chain (974 aa).

Residues 1–14 (GISVPGPMGPSGPR) show a composition bias toward low complexity. The disordered stretch occupies residues 1–974 (GISVPGPMGP…PGPPGPPGPP (974 aa)). A 4-hydroxyproline mark is found at Pro-17, Pro-20, Pro-23, Pro-32, Pro-35, Pro-38, Pro-53, Pro-68, Pro-75, and Pro-81. Low complexity predominate over residues 25-44 (PQGFQGPPGEPGEPGASGPM). Residues 56–73 (NGDDGEAGKPGRPGERRG) are compositionally biased toward basic and acidic residues. At Lys-84 the chain carries 5-hydroxylysine; alternate. Lys-84 is a glycosylation site (O-linked (Gal...) hydroxylysine; alternate). Residue Ser-90 is modified to Phosphoserine. Residues 98–114 (DAGPAGPKGEPGSPGEN) show a composition bias toward low complexity. 4-hydroxyproline is present on residues Pro-108, Pro-111, Pro-117, Pro-126, Pro-132, Pro-153, Pro-162, Pro-165, Pro-192, Pro-195, Pro-207, Pro-213, Pro-222, Pro-228, Pro-231, and Pro-245. Over residues 132–150 (PGASGPAGARGNDGATGAA) the composition is skewed to low complexity. Residues 152-164 (PPGPTGPAGPPGF) are compositionally biased toward pro residues. Residues 198–228 (AGAAGPAGNPGADGQPGAKGANGAPGIAGAP) show a composition bias toward low complexity. Lys-248 is modified (5-hydroxylysine). Pro-254, Pro-257, Pro-269, Pro-278, Pro-293, Pro-299, Pro-308, and Pro-314 each carry 4-hydroxyproline. The segment covering 303–312 (GERGGPGSRG) has biased composition (gly residues). A 5-hydroxylysine modification is found at Lys-323. 4-hydroxyproline occurs at positions 328, 337, 343, 349, 358, 361, 370, 379, 385, 397, 406, 415, 418, 436, 454, 460, 466, 472, 484, 493, 505, 520, 527, and 536. The span at 352 to 378 (KGLTGSPGSPGPDGKTGPPGPAGQDGR) shows a compositional bias: low complexity. The span at 387-406 (ARGQAGVMGFPGPKGAAGEP) shows a compositional bias: low complexity. Over residues 504–517 (APGNDGAKGDAGAP) the composition is skewed to low complexity. The residue at position 548 (Lys-548) is a 5-hydroxylysine. Residues Pro-554, Pro-569, and Pro-575 each carry the 4-hydroxyproline modification. The span at 581 to 595 (SGPSGPAGPTGARGA) shows a compositional bias: low complexity. Ser-584 is subject to Phosphoserine. 4-hydroxyproline is present on residues Pro-596, Pro-602, Pro-605, Pro-614, Pro-620, Pro-638, Pro-647, and Pro-656. Residues 608–635 (AGFAGPPGADGQPGAKGEPGDAGAKGDA) are compositionally biased toward low complexity. Positions 637 to 649 (PPGPAGPTGPPGP) are enriched in pro residues. 5-hydroxylysine is present on Lys-659. Positions 664–680 (SAGPPGATGFPGAAGRV) are enriched in low complexity. Residues Pro-668 and Pro-674 each carry the 4-hydroxyproline modification. The residue at position 682 (Pro-682) is a 3-hydroxyproline. 4-hydroxyproline occurs at positions 683, 692, 695, 716, 725, 733, 742, 760, 769, 772, 778, 793, 799, 805, 814, and 820. Residues 709–718 (ETGPAGRPGE) are compositionally biased toward low complexity. Residues 730–742 (KGSPGADGPAGAP) show a composition bias toward low complexity. Pro residues predominate over residues 792 to 802 (PPGPVGPPGLA). Positions 804–826 (PPGESGREGSPGAEGSPGRDGSP) are enriched in low complexity. Over residues 828-844 (PKGPPGAPGAPGAPGPV) the composition is skewed to pro residues. Lys-829 is subject to 5-hydroxylysine. 4-hydroxyproline occurs at positions 832, 835, and 838. The segment covering 865-879 (AGPAGARGPAGPQGP) has biased composition (low complexity). Basic and acidic residues predominate over residues 880–894 (RGDKGETGEQGDRRG). Residue Lys-883 is modified to 5-hydroxylysine. 4-hydroxyproline occurs at positions 905, 908, 926, and 941. Over residues 908 to 941 (PGEQGPSGASGPAGPRGPPGSAGSPGKDGLNGLP) the composition is skewed to low complexity. Residue Pro-946 is modified to 3-hydroxyproline. Pro-947 carries the 4-hydroxyproline modification. Pro residues predominate over residues 959 to 974 (VGPPGPPGPPGPPGPP). The residue at position 961 (Pro-961) is a 3-hydroxyproline. Pro-962 carries the post-translational modification 4-hydroxyproline. Residue Pro-964 is modified to 3-hydroxyproline. A 4-hydroxyproline modification is found at Pro-965. The residue at position 967 (Pro-967) is a 3-hydroxyproline. 3 positions are modified to 4-hydroxyproline: Pro-968, Pro-971, and Pro-974.

The protein belongs to the fibrillar collagen family. As to quaternary structure, trimers of one alpha 2(I) and two alpha 1(I) chains. Post-translationally, contains mostly 4-hydroxyproline. Proline residues at the third position of the tripeptide repeating unit (G-X-Y) are hydroxylated in some or all of the chains. Contains 3-hydroxyproline at a few sites. This modification occurs on the first proline residue in the sequence motif Gly-Pro-Hyp, where Hyp is 4-hydroxyproline. In terms of processing, lysine residues at the third position of the tripeptide repeating unit (G-X-Y) are 5-hydroxylated in some or all of the chains. Post-translationally, O-glycosylated on hydroxylated lysine residues. The O-linked glycan consists of a Glc-Gal disaccharide. Expressed in bones.

It is found in the secreted. Its subcellular location is the extracellular space. The protein resides in the extracellular matrix. Functionally, type I collagen is a member of group I collagen (fibrillar forming collagen). The sequence is that of Collagen alpha-1(I) chain from Scelidodon sp. (strain SLP-2019) (South American ground sloth).